The primary structure comprises 165 residues: MAKNNKKIKTSLNIIALNKKARHNYFIEQTLEAGLSLEGWEVKSLRDSKVQIKESYVILKNNELFLFGAHISPLKSVSTHVNSDSTRTRKLLLNRLEINRIKDNINQKGATIVPLKLYWARGKVKLEIGMAKGKKSHDKRQDIKLKDWQRDKQRTLKETNKIFNF.

The protein belongs to the SmpB family.

The protein localises to the cytoplasm. In terms of biological role, required for rescue of stalled ribosomes mediated by trans-translation. Binds to transfer-messenger RNA (tmRNA), required for stable association of tmRNA with ribosomes. tmRNA and SmpB together mimic tRNA shape, replacing the anticodon stem-loop with SmpB. tmRNA is encoded by the ssrA gene; the 2 termini fold to resemble tRNA(Ala) and it encodes a 'tag peptide', a short internal open reading frame. During trans-translation Ala-aminoacylated tmRNA acts like a tRNA, entering the A-site of stalled ribosomes, displacing the stalled mRNA. The ribosome then switches to translate the ORF on the tmRNA; the nascent peptide is terminated with the 'tag peptide' encoded by the tmRNA and targeted for degradation. The ribosome is freed to recommence translation, which seems to be the essential function of trans-translation. The chain is SsrA-binding protein from Ruthia magnifica subsp. Calyptogena magnifica.